Consider the following 145-residue polypeptide: 3-dehydroquinate dehydratase (145 aa).

Residue Y24 is the Proton acceptor of the active site. N76, H82, and D89 together coordinate substrate. The active-site Proton donor is the H102. Residues V103–S104 and R113 contribute to the substrate site.

The protein belongs to the type-II 3-dehydroquinase family. Homododecamer.

The enzyme catalyses 3-dehydroquinate = 3-dehydroshikimate + H2O. It functions in the pathway metabolic intermediate biosynthesis; chorismate biosynthesis; chorismate from D-erythrose 4-phosphate and phosphoenolpyruvate: step 3/7. In terms of biological role, catalyzes a trans-dehydration via an enolate intermediate. The protein is 3-dehydroquinate dehydratase of Janthinobacterium sp. (strain Marseille) (Minibacterium massiliensis).